The following is a 148-amino-acid chain: Large ribosomal subunit protein bL9 (148 aa).

This sequence belongs to the bacterial ribosomal protein bL9 family.

Its function is as follows. Binds to the 23S rRNA. This is Large ribosomal subunit protein bL9 from Methylobacillus flagellatus (strain ATCC 51484 / DSM 6875 / VKM B-1610 / KT).